Consider the following 251-residue polypeptide: Triosephosphate isomerase (251 aa).

9–11 contacts substrate; sequence NWK. The Electrophile role is filled by histidine 96. The Proton acceptor role is filled by glutamate 166. Residues glycine 172, serine 212, and 233–234 contribute to the substrate site; that span reads GG.

The protein belongs to the triosephosphate isomerase family. In terms of assembly, homodimer.

It is found in the cytoplasm. The catalysed reaction is D-glyceraldehyde 3-phosphate = dihydroxyacetone phosphate. Its pathway is carbohydrate biosynthesis; gluconeogenesis. It functions in the pathway carbohydrate degradation; glycolysis; D-glyceraldehyde 3-phosphate from glycerone phosphate: step 1/1. Functionally, involved in the gluconeogenesis. Catalyzes stereospecifically the conversion of dihydroxyacetone phosphate (DHAP) to D-glyceraldehyde-3-phosphate (G3P). The sequence is that of Triosephosphate isomerase from Pelodictyon phaeoclathratiforme (strain DSM 5477 / BU-1).